A 98-amino-acid chain; its full sequence is Dehydrin HIRD11 (98 aa).

The segment at 1–98 (MAGLINKIGD…HSSSSDSDSD (98 aa)) is disordered. Residues 19-72 (KEGEHKKEEEHKKHVDEHKSGEHKEGIVDKIKDKIHGGEGKSHDGEGKSHDGEK) show a composition bias toward basic and acidic residues. Basic residues predominate over residues 73–82 (KKKKDKKEKK).

This sequence belongs to the KS-type dehydrin family. Interacts with PXL1. In terms of processing, phosphorylated in vivo. Phosphorylated in vitro by PXL1. As to expression, highly expressed in the cambial zone of the stem vasculature (at protein level). Expressed in roots, rosettes leaves, stems, cauline leaves, flowers and siliques.

Its subcellular location is the cytoplasm. It is found in the nucleus. Its function is as follows. Intrinsically disordered and metal-binding protein. Binds to the divalent cations cobalt, nickel, copper and zinc, but not to magnesium, calcium, manganese or cadmium. Binding to metal ions decreases disordered state, decreases susceptibility to trypsin and promotes self-association. Can reduce the formation of reactive oxygen species (ROS) in a copper-ascorbate in vitro system. This chain is Dehydrin HIRD11, found in Arabidopsis thaliana (Mouse-ear cress).